Reading from the N-terminus, the 471-residue chain is Tyrosine--tRNA ligase (471 aa).

Tyr-41 lines the L-tyrosine pocket. The 'HIGH' region signature appears at 46–55 (PTAPSLHVGN). L-tyrosine-binding residues include Tyr-176 and Gln-180. The short motif at 236 to 240 (KFGKT) is the 'KMSKS' region element. Lys-239 provides a ligand contact to ATP. In terms of domain architecture, S4 RNA-binding spans 403 to 471 (DLITHILQKV…GKKHLAAVFY (69 aa)).

Belongs to the class-I aminoacyl-tRNA synthetase family. TyrS type 1 subfamily. In terms of assembly, homodimer.

It localises to the cytoplasm. The catalysed reaction is tRNA(Tyr) + L-tyrosine + ATP = L-tyrosyl-tRNA(Tyr) + AMP + diphosphate + H(+). Functionally, catalyzes the attachment of tyrosine to tRNA(Tyr) in a two-step reaction: tyrosine is first activated by ATP to form Tyr-AMP and then transferred to the acceptor end of tRNA(Tyr). This Tropheryma whipplei (strain Twist) (Whipple's bacillus) protein is Tyrosine--tRNA ligase.